A 539-amino-acid polypeptide reads, in one-letter code: Aluminum-activated malate transporter 13 (539 aa).

6 helical membrane-spanning segments follow: residues 57 to 77 (VGVA…FEGV), 80 to 100 (NALW…GATL), 107 to 127 (GLGT…AIHS), 130 to 150 (ILGG…ITYM), 165 to 185 (LVFL…DTVI), and 192 to 212 (LYTI…FFPI).

It belongs to the aromatic acid exporter (TC 2.A.85) family.

Its subcellular location is the membrane. In terms of biological role, malate transporter. This is Aluminum-activated malate transporter 13 (ALMT13) from Arabidopsis thaliana (Mouse-ear cress).